The sequence spans 69 residues: YPPKPETPGSNASPEDWASYQAAVRHYVNLITRQRYGXXSSPEEAVAWLLFKADPSQDIEPRLDDDNAW.

Belongs to the NPY family.

The protein resides in the secreted. This chain is Pancreatic propolypeptide YG, found in Lophius americanus (American angler).